Consider the following 504-residue polypeptide: Anaerobic nitric oxide reductase transcription regulator NorR (504 aa).

The residue at position 57 (aspartate 57) is a 4-aspartylphosphate. Residues 187-416 (MIGLSPGMTQ…LEHAIHRAVV (230 aa)) form the Sigma-54 factor interaction domain. ATP-binding positions include 215-222 (GETGTGKE) and 278-287 (ADNGTLFLDE). The segment at residues 479–498 (WAACARMLETDVANLHRLAK) is a DNA-binding region (H-T-H motif).

Its pathway is nitrogen metabolism; nitric oxide reduction. In terms of biological role, required for the expression of anaerobic nitric oxide (NO) reductase, acts as a transcriptional activator for at least the norVW operon. Activation also requires sigma-54. The polypeptide is Anaerobic nitric oxide reductase transcription regulator NorR (Escherichia coli O8 (strain IAI1)).